We begin with the raw amino-acid sequence, 362 residues long: Heat-inducible transcription repressor HrcA (362 aa).

Belongs to the HrcA family.

Negative regulator of class I heat shock genes (grpE-dnaK-dnaJ and groELS operons). Prevents heat-shock induction of these operons. The chain is Heat-inducible transcription repressor HrcA from Rhodopseudomonas palustris (strain ATCC BAA-98 / CGA009).